We begin with the raw amino-acid sequence, 1611 residues long: Pentafunctional AROM polypeptide (1611 aa).

The interval 1 to 406 (MSQVSGGKVP…VEERASTVSD (406 aa)) is 3-dehydroquinate synthase. NAD(+) is bound by residues 64 to 66 (DTN), 97 to 100 (EESK), 128 to 130 (GGV), and aspartate 133. A 7-phospho-2-dehydro-3-deoxy-D-arabino-heptonate-binding site is contributed by arginine 144. An NAD(+)-binding site is contributed by 153 to 154 (TT). Positions 160 and 166 each coordinate 7-phospho-2-dehydro-3-deoxy-D-arabino-heptonate. Residue lysine 175 participates in NAD(+) binding. Asparagine 176 lines the 7-phospho-2-dehydro-3-deoxy-D-arabino-heptonate pocket. Residues 193–196 (WLLT) and asparagine 204 contribute to the NAD(+) site. Glutamate 208 serves as a coordination point for Zn(2+). 7-phospho-2-dehydro-3-deoxy-D-arabino-heptonate-binding positions include 208–211 (EVIK) and lysine 272. Glutamate 282 functions as the Proton acceptor; for 3-dehydroquinate synthase activity in the catalytic mechanism. Residues 286–290 (RNLVN) and histidine 293 each bind 7-phospho-2-dehydro-3-deoxy-D-arabino-heptonate. Histidine 293 contacts Zn(2+). The active-site Proton acceptor; for 3-dehydroquinate synthase activity is the histidine 297. Positions 309 and 378 each coordinate 7-phospho-2-dehydro-3-deoxy-D-arabino-heptonate. Histidine 309 lines the Zn(2+) pocket. Residues 419–882 (VRESVSAPRP…WDVLGGPLNV (464 aa)) form an EPSP synthase region. Residue cysteine 864 is the For EPSP synthase activity of the active site. A shikimate kinase region spans residues 915 to 1092 (DASIVLIGMR…VPISPAFFLS (178 aa)). 922 to 929 (GMRASGKS) is an ATP binding site. A 3-dehydroquinase region spans residues 1093–1309 (LTFPRVQDAW…AAPGQMSVRD (217 aa)). Catalysis depends on histidine 1212, which acts as the Proton acceptor; for 3-dehydroquinate dehydratase activity. The Schiff-base intermediate with substrate; for 3-dehydroquinate dehydratase activity role is filled by lysine 1240. A shikimate dehydrogenase region spans residues 1322–1611 (KRHFFLFGSP…AAYRAAAASM (290 aa)).

The protein in the N-terminal section; belongs to the sugar phosphate cyclases superfamily. Dehydroquinate synthase family. This sequence in the 2nd section; belongs to the EPSP synthase family. In the 3rd section; belongs to the shikimate kinase family. It in the 4th section; belongs to the type-I 3-dehydroquinase family. The protein in the C-terminal section; belongs to the shikimate dehydrogenase family. Homodimer. The cofactor is Zn(2+).

Its subcellular location is the cytoplasm. The enzyme catalyses 7-phospho-2-dehydro-3-deoxy-D-arabino-heptonate = 3-dehydroquinate + phosphate. It catalyses the reaction 3-dehydroquinate = 3-dehydroshikimate + H2O. The catalysed reaction is shikimate + NADP(+) = 3-dehydroshikimate + NADPH + H(+). It carries out the reaction shikimate + ATP = 3-phosphoshikimate + ADP + H(+). The enzyme catalyses 3-phosphoshikimate + phosphoenolpyruvate = 5-O-(1-carboxyvinyl)-3-phosphoshikimate + phosphate. It functions in the pathway metabolic intermediate biosynthesis; chorismate biosynthesis; chorismate from D-erythrose 4-phosphate and phosphoenolpyruvate: step 2/7. The protein operates within metabolic intermediate biosynthesis; chorismate biosynthesis; chorismate from D-erythrose 4-phosphate and phosphoenolpyruvate: step 3/7. It participates in metabolic intermediate biosynthesis; chorismate biosynthesis; chorismate from D-erythrose 4-phosphate and phosphoenolpyruvate: step 4/7. Its pathway is metabolic intermediate biosynthesis; chorismate biosynthesis; chorismate from D-erythrose 4-phosphate and phosphoenolpyruvate: step 5/7. It functions in the pathway metabolic intermediate biosynthesis; chorismate biosynthesis; chorismate from D-erythrose 4-phosphate and phosphoenolpyruvate: step 6/7. Its function is as follows. The AROM polypeptide catalyzes 5 consecutive enzymatic reactions in prechorismate polyaromatic amino acid biosynthesis. The chain is Pentafunctional AROM polypeptide from Malassezia globosa (strain ATCC MYA-4612 / CBS 7966) (Dandruff-associated fungus).